Consider the following 212-residue polypeptide: Pyridoxine/pyridoxamine 5'-phosphate oxidase (212 aa).

The tract at residues 1-20 (MSDSAMEPQNPLTSGDFTAA) is disordered. Residues 59–64 (RMVLLK), 74–75 (YT), K81, and Q103 contribute to the FMN site. A substrate-binding site is contributed by K64. Residues Y121, R125, and S129 each coordinate substrate. FMN is bound by residues 138-139 (QS) and W183. Residue 189 to 191 (RLH) participates in substrate binding. Position 193 (R193) interacts with FMN.

Belongs to the pyridoxamine 5'-phosphate oxidase family. In terms of assembly, homodimer. FMN is required as a cofactor.

The enzyme catalyses pyridoxamine 5'-phosphate + O2 + H2O = pyridoxal 5'-phosphate + H2O2 + NH4(+). The catalysed reaction is pyridoxine 5'-phosphate + O2 = pyridoxal 5'-phosphate + H2O2. It functions in the pathway cofactor metabolism; pyridoxal 5'-phosphate salvage; pyridoxal 5'-phosphate from pyridoxamine 5'-phosphate: step 1/1. The protein operates within cofactor metabolism; pyridoxal 5'-phosphate salvage; pyridoxal 5'-phosphate from pyridoxine 5'-phosphate: step 1/1. Catalyzes the oxidation of either pyridoxine 5'-phosphate (PNP) or pyridoxamine 5'-phosphate (PMP) into pyridoxal 5'-phosphate (PLP). This chain is Pyridoxine/pyridoxamine 5'-phosphate oxidase, found in Azorhizobium caulinodans (strain ATCC 43989 / DSM 5975 / JCM 20966 / LMG 6465 / NBRC 14845 / NCIMB 13405 / ORS 571).